The primary structure comprises 567 residues: Septation ring formation regulator EzrA (567 aa).

The Extracellular portion of the chain corresponds to 1 to 2 (ME). The helical transmembrane segment at 3-21 (IAVIVLLLLGGVMIYNHVY) threads the bilayer. Over 22–567 (RKKMYSEIDR…IFRDERSKEE (546 aa)) the chain is Cytoplasmic. 2 coiled-coil regions span residues 97-188 (RYAK…LTAS) and 254-465 (REIV…LEEK).

The protein belongs to the EzrA family.

The protein resides in the cell membrane. Negative regulator of FtsZ ring formation; modulates the frequency and position of FtsZ ring formation. Inhibits FtsZ ring formation at polar sites. Interacts either with FtsZ or with one of its binding partners to promote depolymerization. In Geobacillus sp. (strain WCH70), this protein is Septation ring formation regulator EzrA.